A 63-amino-acid polypeptide reads, in one-letter code: Large ribosomal subunit protein uL29 (63 aa).

It belongs to the universal ribosomal protein uL29 family.

This is Large ribosomal subunit protein uL29 from Sodalis glossinidius (strain morsitans).